A 937-amino-acid polypeptide reads, in one-letter code: Bifunctional glutamine synthetase adenylyltransferase/adenylyl-removing enzyme (937 aa).

The segment at 1–436 is adenylyl removase; that stretch reads MSQPIPSASP…AAEFAELLAP (436 aa). Residues 443–937 are adenylyl transferase; the sequence is PDTLADYWRA…QLRFQPGKGA (495 aa).

It belongs to the GlnE family. The cofactor is Mg(2+).

It carries out the reaction [glutamine synthetase]-O(4)-(5'-adenylyl)-L-tyrosine + phosphate = [glutamine synthetase]-L-tyrosine + ADP. The catalysed reaction is [glutamine synthetase]-L-tyrosine + ATP = [glutamine synthetase]-O(4)-(5'-adenylyl)-L-tyrosine + diphosphate. In terms of biological role, involved in the regulation of glutamine synthetase GlnA, a key enzyme in the process to assimilate ammonia. When cellular nitrogen levels are high, the C-terminal adenylyl transferase (AT) inactivates GlnA by covalent transfer of an adenylyl group from ATP to specific tyrosine residue of GlnA, thus reducing its activity. Conversely, when nitrogen levels are low, the N-terminal adenylyl removase (AR) activates GlnA by removing the adenylyl group by phosphorolysis, increasing its activity. The regulatory region of GlnE binds the signal transduction protein PII (GlnB) which indicates the nitrogen status of the cell. This chain is Bifunctional glutamine synthetase adenylyltransferase/adenylyl-removing enzyme, found in Xanthomonas campestris pv. campestris (strain ATCC 33913 / DSM 3586 / NCPPB 528 / LMG 568 / P 25).